The primary structure comprises 1285 residues: Transmembrane channel-like protein 1 (1285 aa).

Residues 1–29 (MQEAARRASLRKEHTPTNEKFGDLSKQDS) are disordered. Residues 1-164 (MQEAARRASL…KIKRIESHFG (164 aa)) lie on the Cytoplasmic side of the membrane. Residues 165–202 (SVVSSYFTFLRWIVFVNIMITLIALVFVVLPETLADSV) traverse the membrane as a helical segment. Residues 203–260 (ANEGRFNRTKTRKQIPANERVHADELAVVWHYDGYLRYSPLFYGYYSDDPFLGNKIKY) lie on the Extracellular side of the membrane. Residue Asn-209 is glycosylated (N-linked (GalNAc...) asparagine). Residues 261–292 (ALPLAYFMVTLTIFAYSFFAILRKMAANARMS) form a helical membrane-spanning segment. The Cytoplasmic portion of the chain corresponds to 293-349 (KLSGSKAEQYIFNWKLFTGWDYTIGNSETASNTVMAVVIKLRESIADIKKDAHGKFR). Residues 350-381 (LLQFSLRVFANIIICAMLGFSIYCIIFAVQKS) traverse the membrane as a helical segment. Residues 382-388 (QVQDDGN) are Extracellular-facing. Residues 389 to 416 (LFTKNQVPSVVSTITHVFPMIFDLIGKM) form a helical membrane-spanning segment. Residues 417 to 420 (ENYH) are Cytoplasmic-facing. Residues 421–455 (PRTALRAHLGRVLILYTVNYITLIFALFEKMTALR) form a helical membrane-spanning segment. Topologically, residues 456–667 (DRVNSTSTSS…NHDGHNNDIC (212 aa)) are extracellular. The tract at residues 458–488 (VNSTSTSSSHRTKRQQGGWNPNMQRPPPYAS) is disordered. Residues Cys-667 and Cys-816 are joined by a disulfide bond. A helical transmembrane segment spans residues 668-705 (WETIIGQEIVKLVTMDLIFTILSILVIDLFRGLWIKYC). Residues 696 to 720 (LFRGLWIKYCSSWWCWDIETTFPEY) are required for interaction with tmie. Over 706–724 (SSWWCWDIETTFPEYGEFK) the chain is Cytoplasmic. The helical transmembrane segment at 725–745 (VAENVLHIINNQGMIWLGLFF) threads the bilayer. Topologically, residues 746–748 (APL) are extracellular. Residues 749–771 (LPAINNIKLIILMYIRGWAVMTC) form a helical membrane-spanning segment. The tract at residues 766-773 (WAVMTCNV) is required for interaction with tmie. At 772 to 785 (NVPAREIFRASRSS) the chain is on the cytoplasmic side. The chain crosses the membrane as a helical span at residues 786–809 (NFYLGILLIWLLLCTLPVGFVIAS). At 810–852 (MSPSRSCGPFARYQHFYTVVTREIEKRVDQTVLSYIRHIASPG) the chain is on the extracellular side. The chain crosses the membrane as a helical span at residues 853-886 (VVIPIILFLILIIYFLFSLVRGLREANTDLQAQL). The Cytoplasmic portion of the chain corresponds to 887–1285 (VHERTEEKKK…DEDDSPRQID (399 aa)). Disordered regions lie at residues 940–962 (ADHALASDSSEESDINEDEDDER) and 1114–1285 (TIKE…RQID). Acidic residues predominate over residues 948-961 (SSEESDINEDEDDE). Basic and acidic residues-rich tracts occupy residues 1121-1131 (DPGKSDKKQTS), 1146-1156 (DEARALREKMK), and 1167-1182 (TVEEKPKGGKSSESEF). Acidic residues predominate over residues 1197–1208 (TEEENEEEETDS).

The protein belongs to the TMC family. As to quaternary structure, homodimer. Interacts with calm-1 and tmie to form the MET channel. Expressed in the ASH polymodal avoidance neurons. Also expressed in other sensory neurons, including the ADF, ASE, ADL, AQR, PQR, URX and PHA cells.

It is found in the cell membrane. It carries out the reaction Na(+)(in) = Na(+)(out). The catalysed reaction is Ca(2+)(in) = Ca(2+)(out). It catalyses the reaction K(+)(in) = K(+)(out). Pore-forming subunit of the mechanotransducer (MET) non-selective cation channel complex. The MET complex is composed of symmetric dimeric MET channels, each channel comprising two copies of pore-forming ion-conducting transmembrane TMC subunits and auxiliary proteins including the transmembrane inner ear protein/tmie, the calcium-binding protein/calm-1 and arrestin domain protein arrd-6. Sodium ions are the most permeable, whereas calcium and potassium have lower indices. Sodium-sensor ion channel that acts specifically in salt taste chemosensation. Required for salt-evoked neuronal activity and behavioral avoidance of high concentrations of NaCl. The sequence is that of Transmembrane channel-like protein 1 (tmc-1) from Caenorhabditis elegans.